A 440-amino-acid polypeptide reads, in one-letter code: MDRTEPDDELLQTIVTQTAGCGSILLAYSGGLDSSVLLHLLVTVRQRSGQTIRAAYIHHGLNPLADSWAEHCRQQCERWQVPFSSLAVTVEAQNGGIEAAARTARYQALQVHLKEGETLLTAQHLDDQSETFLLALKRGSGPAGLSAMAANSFLGHHRLVRPLLGFSRLQLEAYAQRHQLRWIEDDSNQDERFDRNFLRRQILPRLTQRWPHFPSAVARSAELCAEQEQLLDELLEESLRTLRQPDGALSIDGLVPLSPVRRFALLRRWLAQQGATMPARDQLQRLWDEVAASRRDAEPILQLNQMQIRRFRQHLYLLPLMPSLKDRVLPWQPTSCPLSLPDNLGTLLLADSGVAVRAPKNGETVSIRFSTSGTVHIVGRAHGRQIKKLWQELGVPPWWRDRTPLLFYNEQLIAAVGRFVTREGQVREHQPLWHIVWERN.

An ATP-binding site is contributed by 29 to 34 (SGGLDS).

The protein belongs to the tRNA(Ile)-lysidine synthase family.

It localises to the cytoplasm. The enzyme catalyses cytidine(34) in tRNA(Ile2) + L-lysine + ATP = lysidine(34) in tRNA(Ile2) + AMP + diphosphate + H(+). In terms of biological role, ligates lysine onto the cytidine present at position 34 of the AUA codon-specific tRNA(Ile) that contains the anticodon CAU, in an ATP-dependent manner. Cytidine is converted to lysidine, thus changing the amino acid specificity of the tRNA from methionine to isoleucine. In Pectobacterium atrosepticum (strain SCRI 1043 / ATCC BAA-672) (Erwinia carotovora subsp. atroseptica), this protein is tRNA(Ile)-lysidine synthase.